Consider the following 788-residue polypeptide: Protein FAR1-RELATED SEQUENCE 5 (788 aa).

Residues 87-179 (AFYNSYARRI…VKDHNHELVP (93 aa)) form the FAR1 domain. An MULE domain is found at 299–395 (TVTFDTTYRS…CKWHILKKCQ (97 aa)). The segment at 584–616 (FNVLEMRANCSCQMFEFSGIICRHILAVFRVTN) adopts an SWIM-type zinc-finger fold. Residues 713 to 733 (SSVTGGKHQQEVLAQPEPEDE) form a disordered region. Residues 731–768 (EDEMDKKINQLRNELELANRKCEAYRTNLLSVLKEMED) are a coiled coil.

This sequence belongs to the FHY3/FAR1 family. As to expression, expressed in hypocotyls, rosette and cauline leaves, inflorescences stems, flowers and siliques.

The protein localises to the nucleus. In terms of biological role, putative transcription activator involved in regulating light control of development. The protein is Protein FAR1-RELATED SEQUENCE 5 (FRS5) of Arabidopsis thaliana (Mouse-ear cress).